The primary structure comprises 440 residues: Argininosuccinate lyase (440 aa).

The protein belongs to the lyase 1 family. Argininosuccinate lyase subfamily.

The protein resides in the cytoplasm. It catalyses the reaction 2-(N(omega)-L-arginino)succinate = fumarate + L-arginine. The protein operates within amino-acid biosynthesis; L-arginine biosynthesis; L-arginine from L-ornithine and carbamoyl phosphate: step 3/3. The polypeptide is Argininosuccinate lyase (Clostridium botulinum (strain ATCC 19397 / Type A)).